A 365-amino-acid chain; its full sequence is Tetraacyldisaccharide 4'-kinase (365 aa).

68 to 75 (VVGGAGKT) provides a ligand contact to ATP.

This sequence belongs to the LpxK family.

It catalyses the reaction a lipid A disaccharide + ATP = a lipid IVA + ADP + H(+). Its pathway is glycolipid biosynthesis; lipid IV(A) biosynthesis; lipid IV(A) from (3R)-3-hydroxytetradecanoyl-[acyl-carrier-protein] and UDP-N-acetyl-alpha-D-glucosamine: step 6/6. Transfers the gamma-phosphate of ATP to the 4'-position of a tetraacyldisaccharide 1-phosphate intermediate (termed DS-1-P) to form tetraacyldisaccharide 1,4'-bis-phosphate (lipid IVA). This is Tetraacyldisaccharide 4'-kinase from Chlamydia pneumoniae (Chlamydophila pneumoniae).